A 39-amino-acid polypeptide reads, in one-letter code: Bacteriocin E50-52 (39 aa).

The protein resides in the secreted. Functionally, bacteriocin active against the Gram-negative bacteria C.jejuni, Y.enterocolitica and Y.pseudotuberculosis, and the Gram-positive bacteria S.aureus, S.epidermidis, L.monocytogenes and Listeria spp. When added to the drinking water of chickens, causes a decrease in the levels of C.jejuni and S.enteritidis in the ceca, and in the levels of S.enteritidis in the liver and spleen. This is Bacteriocin E50-52 from Enterococcus faecium (Streptococcus faecium).